Reading from the N-terminus, the 533-residue chain is 2-isopropylmalate synthase (533 aa).

One can recognise a Pyruvate carboxyltransferase domain in the interval 8-269 (ILIFDTTLRD…YFNPFLGRPA (262 aa)). Residues aspartate 17, histidine 208, histidine 210, and asparagine 244 each coordinate Mn(2+). The tract at residues 408-533 (RLERVQVSCG…REHPPVVASL (126 aa)) is regulatory domain.

It belongs to the alpha-IPM synthase/homocitrate synthase family. LeuA type 1 subfamily. Homodimer. The cofactor is Mn(2+).

The protein resides in the cytoplasm. The catalysed reaction is 3-methyl-2-oxobutanoate + acetyl-CoA + H2O = (2S)-2-isopropylmalate + CoA + H(+). Its pathway is amino-acid biosynthesis; L-leucine biosynthesis; L-leucine from 3-methyl-2-oxobutanoate: step 1/4. In terms of biological role, catalyzes the condensation of the acetyl group of acetyl-CoA with 3-methyl-2-oxobutanoate (2-ketoisovalerate) to form 3-carboxy-3-hydroxy-4-methylpentanoate (2-isopropylmalate). This Synechocystis sp. (strain ATCC 27184 / PCC 6803 / Kazusa) protein is 2-isopropylmalate synthase.